The primary structure comprises 583 residues: CTP synthase (583 aa).

The amidoligase domain stretch occupies residues 1–278 (MRRHPQTATK…DAFVVRRLNL (278 aa)). Ser-20 is a CTP binding site. Ser-20 provides a ligand contact to UTP. ATP-binding positions include 21-26 (SLGKGL) and Asp-78. The Mg(2+) site is built by Asp-78 and Glu-152. CTP-binding positions include 159–161 (DIE), 199–204 (KTKPTQ), and Lys-235. Residues 199–204 (KTKPTQ) and Lys-235 contribute to the UTP site. A Glutamine amidotransferase type-1 domain is found at 303–551 (RIALVGKYVE…VKAAIDYKEG (249 aa)). Gly-366 contributes to the L-glutamine binding site. Residue Cys-393 is the Nucleophile; for glutamine hydrolysis of the active site. Residues 394–397 (LGLQ), Glu-416, and Arg-477 each bind L-glutamine. Catalysis depends on residues His-524 and Glu-526. Residues 559–583 (PERVSNGAERRDQVGQSIPEPANRG) are disordered.

Belongs to the CTP synthase family. Homotetramer.

It carries out the reaction UTP + L-glutamine + ATP + H2O = CTP + L-glutamate + ADP + phosphate + 2 H(+). It catalyses the reaction L-glutamine + H2O = L-glutamate + NH4(+). The catalysed reaction is UTP + NH4(+) + ATP = CTP + ADP + phosphate + 2 H(+). It functions in the pathway pyrimidine metabolism; CTP biosynthesis via de novo pathway; CTP from UDP: step 2/2. With respect to regulation, allosterically activated by GTP, when glutamine is the substrate; GTP has no effect on the reaction when ammonia is the substrate. The allosteric effector GTP functions by stabilizing the protein conformation that binds the tetrahedral intermediate(s) formed during glutamine hydrolysis. Inhibited by the product CTP, via allosteric rather than competitive inhibition. In terms of biological role, catalyzes the ATP-dependent amination of UTP to CTP with either L-glutamine or ammonia as the source of nitrogen. Regulates intracellular CTP levels through interactions with the four ribonucleotide triphosphates. In Mycobacterium marinum (strain ATCC BAA-535 / M), this protein is CTP synthase.